Consider the following 347-residue polypeptide: Mediator of RNA polymerase II transcription subunit 7 (347 aa).

Disordered regions lie at residues 97–172 (GIER…TQTH) and 302–326 (VPVGARTGTTVGDRRVGVDGEGAEE). Composition is skewed to low complexity over residues 108 to 171 (STTT…STQT) and 302 to 312 (VPVGARTGTTV).

This sequence belongs to the Mediator complex subunit 7 family. Component of the Mediator complex.

It is found in the nucleus. In terms of biological role, component of the Mediator complex, a coactivator involved in the regulated transcription of nearly all RNA polymerase II-dependent genes. Mediator functions as a bridge to convey information from gene-specific regulatory proteins to the basal RNA polymerase II transcription machinery. Mediator is recruited to promoters by direct interactions with regulatory proteins and serves as a scaffold for the assembly of a functional preinitiation complex with RNA polymerase II and the general transcription factors. This chain is Mediator of RNA polymerase II transcription subunit 7 (med-7), found in Neurospora crassa (strain ATCC 24698 / 74-OR23-1A / CBS 708.71 / DSM 1257 / FGSC 987).